Here is a 609-residue protein sequence, read N- to C-terminus: Sulfite reductase [NADPH] flavoprotein alpha-component (609 aa).

In terms of domain architecture, Flavodoxin-like spans 72–210 (ITLISASQTG…LAAQWRRQLV (139 aa)). FMN contacts are provided by residues 78-83 (SQTGNA) and 125-128 (STQG). In terms of domain architecture, FAD-binding FR-type spans 244–458 (SSPLQATFAV…IEHNDNFRLP (215 aa)). Residues Thr-332, Gln-366, 396–399 (RLYS), 414–416 (TVG), Tyr-420, and 429–432 (GGAS) contribute to the FAD site. NADP(+)-binding positions include 529–530 (SR), 535–539 (KIYVQ), and Asp-571. An FAD-binding site is contributed by Tyr-609.

This sequence belongs to the NADPH-dependent sulphite reductase flavoprotein subunit CysJ family. The protein in the N-terminal section; belongs to the flavodoxin family. In the C-terminal section; belongs to the flavoprotein pyridine nucleotide cytochrome reductase family. In terms of assembly, alpha(8)-beta(8). The alpha component is a flavoprotein, the beta component is a hemoprotein. The cofactor is FAD. FMN serves as cofactor.

It catalyses the reaction hydrogen sulfide + 3 NADP(+) + 3 H2O = sulfite + 3 NADPH + 4 H(+). It functions in the pathway sulfur metabolism; hydrogen sulfide biosynthesis; hydrogen sulfide from sulfite (NADPH route): step 1/1. Component of the sulfite reductase complex that catalyzes the 6-electron reduction of sulfite to sulfide. This is one of several activities required for the biosynthesis of L-cysteine from sulfate. The flavoprotein component catalyzes the electron flow from NADPH -&gt; FAD -&gt; FMN to the hemoprotein component. In Pectobacterium atrosepticum (strain SCRI 1043 / ATCC BAA-672) (Erwinia carotovora subsp. atroseptica), this protein is Sulfite reductase [NADPH] flavoprotein alpha-component.